The sequence spans 123 residues: Large ribosomal subunit protein uL24 (123 aa).

Belongs to the universal ribosomal protein uL24 family. As to quaternary structure, part of the 50S ribosomal subunit.

One of two assembly initiator proteins, it binds directly to the 5'-end of the 23S rRNA, where it nucleates assembly of the 50S subunit. Functionally, located at the polypeptide exit tunnel on the outside of the subunit. The chain is Large ribosomal subunit protein uL24 from Pyrobaculum islandicum (strain DSM 4184 / JCM 9189 / GEO3).